Consider the following 4377-residue polypeptide: E3 ubiquitin-protein ligase HUWE1 (4377 aa).

Phosphoserine is present on residues serine 648 and serine 649. Disordered regions lie at residues 706-758 (KADG…VVGT), 978-1001 (DEKAGTTQGGKRSDGEQDGTAGSM), and 1018-1038 (TLAPMETDEPSSSDSKGKSKI). Over residues 725-735 (ASSEDEEEEEV) the composition is skewed to acidic residues. Polar residues predominate over residues 737–756 (AMQSFNSAQQNETEPNQQVV). Position 740 is a phosphoserine (serine 740). Phosphoserine is present on serine 1084. Positions 1291–1302 (LSKEKEGSRGEE) are enriched in basic and acidic residues. Residues 1291-1320 (LSKEKEGSRGEEEAGQEEGGSRREPQVNQQ) form a disordered region. The 40-residue stretch at 1316 to 1355 (QVNQQQLQQLMDMGFTREHAMEALLNTSTMEQATEYLLTH) folds into the UBA domain. Residues serine 1368, serine 1370, serine 1382, and serine 1395 each carry the phosphoserine modification. The 20-residue stretch at 1370–1389 (SEEDQMMRAIAMSLGQDIPM) folds into the UIM domain. Residues 1396–1415 (PEEVACRKEEEERKAREKQE) form a disordered region. Positions 1603 to 1680 (RAQMTKYLQS…ETGNRRPVML (78 aa)) constitute a WWE domain. A disordered region spans residues 1690–1733 (KNSKSSNGQELEKTLEESKETDIKHKENKGNDIPLALESTNTEK). A compositionally biased stretch (basic and acidic residues) spans 1699–1719 (ELEKTLEESKETDIKHKENKG). The residue at position 1907 (serine 1907) is a Phosphoserine. Disordered regions lie at residues 2019–2065 (APAE…SKPL), 2262–2343 (SLFG…QEMQ), and 2355–2479 (LLER…ASPL). The segment covering 2022 to 2033 (ETSTTGTSQGEA) has biased composition (polar residues). A Phosphothreonine modification is found at threonine 2035. Positions 2037-2057 (EETREGKKDKEGDRTSEEGKQ) are enriched in basic and acidic residues. Composition is skewed to low complexity over residues 2262 to 2271 (SLFGSKSASS) and 2278 to 2291 (DAQGASQDSSSHQQ). At serine 2266 the chain carries Phosphoserine. Position 2267 is an N6-acetyllysine (lysine 2267). 2 stretches are compositionally biased toward acidic residues: residues 2295–2306 (EPGEAEVQEEDH) and 2314–2325 (ADGDIMDGEAET). Residues serine 2362, serine 2365, and serine 2391 each carry the phosphoserine modification. Positions 2388 to 2398 (SNLSQASTLQA) are enriched in polar residues. Over residues 2408–2472 (DPEDEEEHTQ…SEMELDEDYP (65 aa)) the composition is skewed to acidic residues. Phosphoserine occurs at positions 2527, 2532, and 2535. Threonine 2554 is subject to Phosphothreonine. Residues serine 2584, serine 2595, and serine 2619 each carry the phosphoserine modification. Residues 2704–2716 (IIDKGKEDKENRD) are compositionally biased toward basic and acidic residues. Disordered stretches follow at residues 2704–2970 (IIDK…GVDP), 2991–3012 (IRPPTRSAPSSNSSAPAVVGNP), and 3036–3059 (QQRAEQQRRELAQNASSDTPMDPV). Positions 2717-2736 (QSAQCTVTKTNDSTEQNVSD) are enriched in polar residues. Positions 2738–2756 (TPMPDSYPTTPSSTDAPTS) are enriched in low complexity. Phosphothreonine is present on threonine 2751. Composition is skewed to polar residues over residues 2818 to 2835 (AETTQMELSPAPTITSLS), 2847 to 2864 (AVSSQLEGSPMDTSSLAS), and 2877 to 2890 (AGSSEQPTAGSSTP). Phosphoserine is present on residues serine 2826, serine 2833, serine 2835, serine 2861, serine 2887, and serine 2888. Residue threonine 2889 is modified to Phosphothreonine. Low complexity-rich tracts occupy residues 2913 to 2932 (PPEDSSPPASSESSSTRDSA) and 2993 to 3007 (PPTRSAPSSNSSAPA). Serine 2918 is modified (phosphoserine). Residues serine 3116, serine 3117, serine 3122, serine 3127, and serine 3135 each carry the phosphoserine modification. Position 3149 is an omega-N-methylarginine (arginine 3149). Disordered stretches follow at residues 3243 to 3266 (PKLSTSEERGKKSSKSCASSSHEN), 3352 to 3383 (TQQRTKETNCESDRERGSKQACSPCSSQSSSS), 3405 to 3429 (GKNSVKSVPVSSGGEGETSPHSLEA), 3471 to 3514 (SEVQ…TTPV), and 3539 to 3566 (TPTTATTTVSTSTTKGSKSPAKVGEGGS). Residues 3355–3369 (RTKETNCESDRERGS) are compositionally biased toward basic and acidic residues. The segment covering 3370–3383 (KQACSPCSSQSSSS) has biased composition (low complexity). 2 stretches are compositionally biased toward low complexity: residues 3475–3503 (TNSSNSGSSTAATSNTSTTTTTTTTATAP) and 3539–3552 (TPTTATTTVSTSTT). A phosphoserine mark is found at serine 3557, serine 3663, serine 3753, serine 3758, serine 3760, and serine 3761. Positions 3738–3759 (TRRANKKAKQTGRLGSSGLGSA) are disordered. The segment covering 3749–3759 (GRLGSSGLGSA) has biased composition (low complexity). Disordered regions lie at residues 3782-3850 (EGQR…LPLL) and 3897-3951 (RESK…SSSL). A compositionally biased stretch (polar residues) spans 3794-3803 (TSESSNQSET). Phosphoserine is present on residues serine 3810, serine 3818, and serine 3830. The segment covering 3817–3828 (PSPSAQDTQSIV) has biased composition (polar residues). A Phosphothreonine modification is found at threonine 3833. Basic and acidic residues-rich tracts occupy residues 3836–3845 (GEKEKEEKPP) and 3897–3918 (RESKPPVRDTRESQLAHIKDEP). Phosphoserine is present on residues serine 3909 and serine 3922. Residues 3919–3928 (PPLSPAPLTP) show a composition bias toward pro residues. Phosphothreonine occurs at positions 3927 and 3930. Residues 3941 to 3951 (EPSSMHISSSL) are compositionally biased toward polar residues. Residues 4041–4377 (SPEEMKNRLY…QECSEGFGLA (337 aa)) enclose the HECT domain. Tyrosine 4274 is modified (phosphotyrosine). Residue cysteine 4344 is the Glycyl thioester intermediate of the active site.

Belongs to the UPL family. TOM1/PTR1 subfamily. In terms of assembly, interacts with isoform p19ARF of CDKN2A which strongly inhibits HUWE1 ubiquitin ligase activity. Interacts with MYCN, POLB and CDC6. Interacts with PA2G4. Interacts with NR1D1. Interacts with AMBRA1. Interacts with HAPSTR1. Interacts with HAPSTR2. In hepatocytes, interacts with PAQR3; the interaction promotes PPARA poylubiquitination and STUB1-mediated degradation. Post-translationally, phosphorylated on tyrosine; phosphorylation is probably required for its ability to inhibit TP53 transactivation. Widely expressed.

It is found in the cytoplasm. The protein resides in the nucleus. It localises to the mitochondrion. It catalyses the reaction S-ubiquitinyl-[E2 ubiquitin-conjugating enzyme]-L-cysteine + [acceptor protein]-L-lysine = [E2 ubiquitin-conjugating enzyme]-L-cysteine + N(6)-ubiquitinyl-[acceptor protein]-L-lysine.. It functions in the pathway protein modification; protein ubiquitination. Functionally, E3 ubiquitin-protein ligase which mediates ubiquitination and subsequent proteasomal degradation of target proteins. Regulates apoptosis by catalyzing the polyubiquitination and degradation of MCL1. Mediates monoubiquitination of DNA polymerase beta (POLB) at 'Lys-41', 'Lys-61' and 'Lys-81', thereby playing a role in base-excision repair. Also ubiquitinates the p53/TP53 tumor suppressor and core histones including H1, H2A, H2B, H3 and H4. Ubiquitinates MFN2 to negatively regulate mitochondrial fusion in response to decreased stearoylation of TFRC. Ubiquitination of MFN2 also takes place following induction of mitophagy; AMBRA1 acts as a cofactor for HUWE1-mediated ubiquitination. Regulates neural differentiation and proliferation by catalyzing the polyubiquitination and degradation of MYCN. May regulate abundance of CDC6 after DNA damage by polyubiquitinating and targeting CDC6 to degradation. Mediates polyubiquitination of PA2G4. Acts in concert with MYCBP2 to regulate the circadian clock gene expression by promoting the lithium-induced ubiquination and degradation of NR1D1. Binds to an upstream initiator-like sequence in the preprodynorphin gene. Mediates HAPSTR1 degradation, but is also a required cofactor in the pathway by which HAPSTR1 governs stress signaling. Acts as a regulator of the JNK and NF-kappa-B signaling pathways by mediating assembly of heterotypic 'Lys-63'-/'Lys-48'-linked branched ubiquitin chains that are then recognized by TAB2: HUWE1 mediates branching of 'Lys-48'-linked chains of substrates initially modified with 'Lys-63'-linked conjugates by TRAF6. 'Lys-63'-/'Lys-48'-linked branched ubiquitin chains protect 'Lys-63'-linkages from CYLD deubiquitination. Ubiquitinates PPARA in hepatocytes. This Mus musculus (Mouse) protein is E3 ubiquitin-protein ligase HUWE1 (Huwe1).